We begin with the raw amino-acid sequence, 137 residues long: uncharacterized protein (137 aa).

This is an uncharacterized protein from Frog virus 3 (isolate Goorha) (FV-3).